The following is a 236-amino-acid chain: Ubiquinone biosynthesis O-methyltransferase (236 aa).

S-adenosyl-L-methionine-binding residues include Arg39, Gly59, Asp80, and Met124.

This sequence belongs to the methyltransferase superfamily. UbiG/COQ3 family.

It carries out the reaction a 3-demethylubiquinol + S-adenosyl-L-methionine = a ubiquinol + S-adenosyl-L-homocysteine + H(+). It catalyses the reaction a 3-(all-trans-polyprenyl)benzene-1,2-diol + S-adenosyl-L-methionine = a 2-methoxy-6-(all-trans-polyprenyl)phenol + S-adenosyl-L-homocysteine + H(+). Its pathway is cofactor biosynthesis; ubiquinone biosynthesis. Its function is as follows. O-methyltransferase that catalyzes the 2 O-methylation steps in the ubiquinone biosynthetic pathway. The chain is Ubiquinone biosynthesis O-methyltransferase from Shewanella halifaxensis (strain HAW-EB4).